Reading from the N-terminus, the 155-residue chain is Ribonuclease H (155 aa).

Residues 9 to 150 (DGQQVEMWTD…ADALANQGME (142 aa)) form the RNase H type-1 domain. Residues Asp-18, Glu-56, Asp-78, and Asp-142 each coordinate Mg(2+).

This sequence belongs to the RNase H family. As to quaternary structure, monomer. The cofactor is Mg(2+).

The protein localises to the cytoplasm. The catalysed reaction is Endonucleolytic cleavage to 5'-phosphomonoester.. In terms of biological role, endonuclease that specifically degrades the RNA of RNA-DNA hybrids. The protein is Ribonuclease H of Bordetella pertussis (strain Tohama I / ATCC BAA-589 / NCTC 13251).